The sequence spans 341 residues: HTH-type transcriptional repressor PurR (341 aa).

Positions alanine 2–valine 56 constitute an HTH lacI-type domain. The H-T-H motif DNA-binding region spans isoleucine 4–asparagine 23. A DNA-binding region spans residues serine 48–valine 56. 5 residues coordinate hypoxanthine: tyrosine 73, arginine 190, threonine 192, phenylalanine 221, and aspartate 275.

In terms of assembly, homodimer.

Its pathway is purine metabolism; purine nucleotide biosynthesis [regulation]. Functionally, is the main repressor of the genes involved in the de novo synthesis of purine nucleotides, regulating purB, purC, purEK, purF, purHD, purL, purMN and guaBA expression. PurR is allosterically activated to bind its cognate DNA by binding the purine corepressors, hypoxanthine or guanine, thereby effecting transcription repression. The protein is HTH-type transcriptional repressor PurR of Erwinia tasmaniensis (strain DSM 17950 / CFBP 7177 / CIP 109463 / NCPPB 4357 / Et1/99).